The sequence spans 602 residues: MDDHKTASPPRERSYETPPAERPITDAEAARAAALSANEHIKIASGYLRGTLADGLLKHATGAISDDDGQLVKFHGMYLQDDRDLRAERTKKKLEKAYSFMIRLRIAGGVVSPKQWLALDEIARTYANGTLRATTRQTFQYHGVIKSNLKRTMQAIDAVLLDTIAACGDVNRNVMAATNPAQTGAHKAAYQLAKTISDTLLPKTNAWREIWLDGERVVGGEDEAVEPIYGKTYLPRKFKIVVAVPPSNEVDIFAHDLGFIAILDKKNKLKGWNVTVGGGMGMTHGETDTFPRTADVMAFCEPEDALKVAEAVMTVQRDWGNRKSRKNARLKYTIERYGLAAFRAEVERRVGRKLQDPKPFRFESNGDRYGWVEGEDGRHHLTLYLPSGRIKDVEGGPRYLSGLRRIAEVHQGDFRLTGNQNVIVANVPADRKSEIDALVAEYGLNLGVTALRRNSLACVALPTCGLALAESERFMPGLLTELEESLAAHGLQDEDITIRMTGCPNGCARPYIAEIGFVGRGPERYNLYLGAAFDGSRLSKLYAEDVAAKDIRATLDPLFAAYARDRQPGERFGDFVIRAGFVAKTINGPDFHDRTGALKAVA.

A compositionally biased stretch (basic and acidic residues) spans 1–15 (MDDHKTASPPRERSY). Positions 1–24 (MDDHKTASPPRERSYETPPAERPI) are disordered. [4Fe-4S] cluster contacts are provided by cysteine 458, cysteine 464, cysteine 503, and cysteine 507. Cysteine 507 is a binding site for siroheme.

It belongs to the nitrite and sulfite reductase 4Fe-4S domain family. In terms of assembly, alpha(8)-beta(8). The alpha component is a flavoprotein, the beta component is a hemoprotein. Requires siroheme as cofactor. The cofactor is [4Fe-4S] cluster.

It catalyses the reaction hydrogen sulfide + 3 NADP(+) + 3 H2O = sulfite + 3 NADPH + 4 H(+). It functions in the pathway sulfur metabolism; hydrogen sulfide biosynthesis; hydrogen sulfide from sulfite (NADPH route): step 1/1. Component of the sulfite reductase complex that catalyzes the 6-electron reduction of sulfite to sulfide. This is one of several activities required for the biosynthesis of L-cysteine from sulfate. The protein is Sulfite reductase [NADPH] hemoprotein beta-component of Methylobacterium nodulans (strain LMG 21967 / CNCM I-2342 / ORS 2060).